A 183-amino-acid chain; its full sequence is Ribosome maturation factor RimM (183 aa).

The region spanning 103-183 is the PRC barrel domain; that stretch reads EEGDYYWKDL…SIEVDWDPGF (81 aa).

The protein belongs to the RimM family. In terms of assembly, binds ribosomal protein uS19.

The protein localises to the cytoplasm. Functionally, an accessory protein needed during the final step in the assembly of 30S ribosomal subunit, possibly for assembly of the head region. Essential for efficient processing of 16S rRNA. May be needed both before and after RbfA during the maturation of 16S rRNA. It has affinity for free ribosomal 30S subunits but not for 70S ribosomes. The protein is Ribosome maturation factor RimM of Escherichia coli O157:H7 (strain EC4115 / EHEC).